The following is a 327-amino-acid chain: GTPase Obg (327 aa).

In terms of domain architecture, Obg spans 3-160 (NKFTDFIKIY…FIFVLELKIL (158 aa)). The 167-residue stretch at 161–327 (ADVGLIGLPN…LIYYICNILS (167 aa)) folds into the OBG-type G domain. GTP-binding positions include 167–174 (GLPNSGKS), 192–196 (FTTLN), 214–217 (DIPG), 281–284 (SKSD), and 308–310 (SSF). 2 residues coordinate Mg(2+): serine 174 and threonine 194.

Belongs to the TRAFAC class OBG-HflX-like GTPase superfamily. OBG GTPase family. As to quaternary structure, monomer. Mg(2+) is required as a cofactor.

It localises to the cytoplasm. Its function is as follows. An essential GTPase which binds GTP, GDP and possibly (p)ppGpp with moderate affinity, with high nucleotide exchange rates and a fairly low GTP hydrolysis rate. Plays a role in control of the cell cycle, stress response, ribosome biogenesis and in those bacteria that undergo differentiation, in morphogenesis control. The polypeptide is GTPase Obg (Karelsulcia muelleri (strain GWSS) (Sulcia muelleri)).